A 313-amino-acid polypeptide reads, in one-letter code: Cytochrome c biogenesis protein CcsA (313 aa).

The next 8 membrane-spanning stretches (helical) occupy residues 13-35 (ISFSIISIVITTHLMTFAREIAG), 43-63 (GMIAVFLRITGLLVTRWIYSG), 67-87 (LSNLYESLIFLSWGFSLIHMI), 96-116 (FLSSITAPSAILTQGFVTSGL), 142-162 (MLLSYAALLCGSLLSIALLVI), 219-239 (VIGIGFTLLTLGILSGAVWAN), 252-269 (ETWAFITWTISAIYLHTR), and 280-300 (AIVASIGFLIIWICYFGVNLL).

Belongs to the CcmF/CycK/Ccl1/NrfE/CcsA family. May interact with Ccs1.

It is found in the plastid. Its subcellular location is the chloroplast thylakoid membrane. Its function is as follows. Required during biogenesis of c-type cytochromes (cytochrome c6 and cytochrome f) at the step of heme attachment. This Amborella trichopoda protein is Cytochrome c biogenesis protein CcsA.